Here is a 576-residue protein sequence, read N- to C-terminus: Arginine--tRNA ligase (576 aa).

The 'HIGH' region signature appears at 126 to 136 (ANPTGPMHIGH).

The protein belongs to the class-I aminoacyl-tRNA synthetase family. In terms of assembly, monomer.

It localises to the cytoplasm. It catalyses the reaction tRNA(Arg) + L-arginine + ATP = L-arginyl-tRNA(Arg) + AMP + diphosphate. The sequence is that of Arginine--tRNA ligase from Rickettsia africae (strain ESF-5).